The chain runs to 60 residues: uncharacterized protein (60 aa).

The protein localises to the host cytoplasm. This is an uncharacterized protein from Escherichia phage Mu (Bacteriophage Mu).